The following is a 482-amino-acid chain: Catalase (482 aa).

Positions 1-23 are enriched in polar residues; the sequence is MSQNKTLTTASGPPVADNQNSRS. The disordered stretch occupies residues 1-28; that stretch reads MSQNKTLTTASGPPVADNQNSRSAGPRG. Residues histidine 55 and asparagine 128 contribute to the active site. Tyrosine 338 serves as a coordination point for heme. A disordered region spans residues 370 to 395; that stretch reads SMAFGSNGGAAPNYEPNSYADAPKQA.

It belongs to the catalase family. It depends on heme as a cofactor.

The catalysed reaction is 2 H2O2 = O2 + 2 H2O. Functionally, decomposes hydrogen peroxide into water and oxygen; serves to protect cells from the toxic effects of hydrogen peroxide. This is Catalase (cat) from Onchocerca volvulus endobacterium.